Consider the following 190-residue polypeptide: UPF0725 protein At2g20625 (190 aa).

Belongs to the UPF0725 (EMB2204) family.

The chain is UPF0725 protein At2g20625 from Arabidopsis thaliana (Mouse-ear cress).